We begin with the raw amino-acid sequence, 227 residues long: Paired immunoglobulin-like type 2 receptor beta (227 aa).

An N-terminal signal peptide occupies residues Met1–Leu19. Residues Gln20–Arg191 lie on the Extracellular side of the membrane. An Ig-like V-type domain is found at Pro21 to Lys143. The N-linked (GlcNAc...) asparagine glycan is linked to Asn100. Residues Val192 to Leu212 form a helical membrane-spanning segment. The Cytoplasmic segment spans residues Trp213–Phe227.

The protein resides in the membrane. Functionally, paired receptors consist of highly related activating and inhibitory receptors and are widely involved in the regulation of the immune system. PILRB is thought to act as a cellular signaling activating receptor that associates with ITAM-bearing adapter molecules on the cell surface. This Homo sapiens (Human) protein is Paired immunoglobulin-like type 2 receptor beta (PILRB).